The following is a 126-amino-acid chain: Large ribosomal subunit protein bL20 (126 aa).

Basic residues predominate over residues 1-15 (MARVKRAVNAQKKRR). Residues 1–20 (MARVKRAVNAQKKRRTTLER) are disordered.

The protein belongs to the bacterial ribosomal protein bL20 family.

In terms of biological role, binds directly to 23S ribosomal RNA and is necessary for the in vitro assembly process of the 50S ribosomal subunit. It is not involved in the protein synthesizing functions of that subunit. This is Large ribosomal subunit protein bL20 from Beutenbergia cavernae (strain ATCC BAA-8 / DSM 12333 / CCUG 43141 / JCM 11478 / NBRC 16432 / NCIMB 13614 / HKI 0122).